The primary structure comprises 504 residues: Amphoterin-induced protein 3 (504 aa).

A signal peptide spans 1–19; the sequence is MTWLVLLGTLLCMLRVGLG. At 20–383 the chain is on the extracellular side; the sequence is TPDSEGFPPR…PRPEPEAFNT (364 aa). An LRRNT domain is found at 25–61; sequence GFPPRALHNCPYKCICAADLLSCTGLGLQDVPAELPA. 2 disulfide bridges follow: C34–C40 and C38–C47. LRR repeat units follow at residues 62-83, 86-107, 110-133, 134-155, 158-178, and 184-207; these read ATADLDLSHNALQRLRPGWLAP, QLRALHLDHNELDALGRGVFVN, GLRLLDLSSNTLRALGRHDLDGLG, ALEKLLLFNNRLVHLDEHAFHG, ALSHLYLGCNELASFSFDHLH, and HLLTLDLSSNRLGHISVPELAALP. N107 is a glycosylation site (N-linked (GlcNAc...) asparagine). Residues 219–275 enclose the LRRCT domain; the sequence is NPLPCDCRLYHLLQRWHQRGLSAVRDFAREYVCLAFKVPASRVRFFQHSRVFENCSS. Disulfide bonds link C223–C251, C225–C273, and C300–C352. Residues N272, N301, N362, and N368 are each glycosylated (N-linked (GlcNAc...) asparagine). The Ig-like C2-type domain occupies 277–370; that stretch reads PALGLERPEE…HNQTHEYNVS (94 aa). A helical transmembrane segment spans residues 384–404; sequence GFTTLLGCAVGLVLVLLYLFA. Over 405–504 the chain is Cytoplasmic; that stretch reads PPCRCCRRAC…SIGSEGPMTT (100 aa). The interval 422–448 is disordered; the sequence is TPSPLQELSAQSSVLSTTPPDAPSRKA. Over residues 424-440 the composition is skewed to polar residues; it reads SPLQELSAQSSVLSTTP.

It belongs to the immunoglobulin superfamily. AMIGO family. As to quaternary structure, binds AMIGO1 or AMIGO2.

The protein localises to the membrane. May mediate heterophilic cell-cell interaction. May contribute to signal transduction through its intracellular domain. The chain is Amphoterin-induced protein 3 from Homo sapiens (Human).